The sequence spans 336 residues: Glycerol-3-phosphate dehydrogenase [NAD(P)+] (336 aa).

Residues serine 16, tyrosine 17, histidine 37, and lysine 111 each coordinate NADPH. Sn-glycerol 3-phosphate contacts are provided by lysine 111, glycine 140, and threonine 142. Alanine 144 provides a ligand contact to NADPH. Residues lysine 196, aspartate 249, serine 259, arginine 260, and asparagine 261 each coordinate sn-glycerol 3-phosphate. Residue lysine 196 is the Proton acceptor of the active site. Residue arginine 260 coordinates NADPH. NADPH-binding residues include valine 284 and glutamate 286.

It belongs to the NAD-dependent glycerol-3-phosphate dehydrogenase family.

It localises to the cytoplasm. The enzyme catalyses sn-glycerol 3-phosphate + NAD(+) = dihydroxyacetone phosphate + NADH + H(+). It catalyses the reaction sn-glycerol 3-phosphate + NADP(+) = dihydroxyacetone phosphate + NADPH + H(+). It functions in the pathway membrane lipid metabolism; glycerophospholipid metabolism. Catalyzes the reduction of the glycolytic intermediate dihydroxyacetone phosphate (DHAP) to sn-glycerol 3-phosphate (G3P), the key precursor for phospholipid synthesis. The protein is Glycerol-3-phosphate dehydrogenase [NAD(P)+] of Actinobacillus pleuropneumoniae serotype 3 (strain JL03).